We begin with the raw amino-acid sequence, 81 residues long: Mipartoxin-2 (81 aa).

The signal sequence occupies residues 1-21; sequence MKTLLLTLVVVTIVCLDLGNS. 4 disulfides stabilise this stretch: C24/C42, C35/C61, C65/C73, and C74/C79.

This sequence belongs to the three-finger toxin family. Short-chain subfamily. Expressed by the venom gland.

The protein localises to the secreted. Snake venom neurotoxin that blocks neuromuscular transmission, presenting a postsynaptic action through the nicotinic acetylcholine receptor (nAChR). Has no cytotoxic activity. This is Mipartoxin-2 from Micrurus mipartitus (Red-tailed coral snake).